A 327-amino-acid polypeptide reads, in one-letter code: MIGLIIIVVIVLVALLLLFSFVPVGLWISAIAAGVKVGIGTLVGMRLRRVSPRKVISPLIKAHKAGLHLTTNQLESHYLAGGNVDRVVDANIAAQRADINLPFERGAAIDLAGRDVLEAVQMSVNPKVIETPFIAGVAMNGIEVKAKARITVRANIARLVGGAGEETIIARVGEGIVSTIGSSEHHTQVLENPDNISKTVLSKGLDSGTAFEILSIDIADVDISKNIGADLQTEQALADKNIAQAKAEERRAMAVAQEQEMKAKVQEMRSKVVEAEAEVPLAMAEALRSGNLGVKDYYNLKNVEADTGMRNSINQRTNQKDDESPDK.

A helical membrane pass occupies residues 2-22 (IGLIIIVVIVLVALLLLFSFV). The interval 305 to 327 (ADTGMRNSINQRTNQKDDESPDK) is disordered. Basic and acidic residues predominate over residues 318–327 (NQKDDESPDK).

It belongs to the flotillin-like FloA family. Homooligomerizes.

Its subcellular location is the cell membrane. It is found in the membrane raft. In terms of biological role, found in functional membrane microdomains (FMM) that may be equivalent to eukaryotic membrane rafts. FMMs are highly dynamic and increase in number as cells age. Flotillins are thought to be important factors in membrane fluidity. This Staphylococcus saprophyticus subsp. saprophyticus (strain ATCC 15305 / DSM 20229 / NCIMB 8711 / NCTC 7292 / S-41) protein is Flotillin-like protein FloA.